The primary structure comprises 367 residues: Ribosomal lysine N-methyltransferase 5 (367 aa).

A disordered region spans residues 55 to 74; sequence EGGRKKKRVRRRNKASSVEE. Positions 58–68 are enriched in basic residues; the sequence is RKKKRVRRRNK. Residues Trp110, 170-172, Asp192, Trp256, and Met288 each bind S-adenosyl-L-methionine; that span reads GAG.

It belongs to the class I-like SAM-binding methyltransferase superfamily. RKM5 family.

Its function is as follows. S-adenosyl-L-methionine-dependent protein-lysine N-methyltransferase that monomethylates 60S ribosomal protein L1 (RPL1A and RPL1B) at 'Lys-46'. In Saccharomyces cerevisiae (strain RM11-1a) (Baker's yeast), this protein is Ribosomal lysine N-methyltransferase 5 (RKM5).